A 484-amino-acid polypeptide reads, in one-letter code: MIQVLLVTICLAALPYQGSSIILESGNVNDYEVVYPRKVTALPKGAGQPKYEDAMQYEFKVNGEPVVLHLEKNKGLFSKDYSETHYSSDGRKITTNPPVEDHCYYHGRIENDADSTGSISACNGLKGHFKLQGEMYLIEPLKLSDSEAHAIYKYENVEKEDEAPKMCGVTETNWESYEPIKKASQSNLTPEQQRFNPFKYVELVIVADHRMFTKYNGDLEKIRIKIYEIVNILNEMFRYLYIRIALVDLEIWSNRDLINVTSVAGDTLDSFGNWRETDLLKRKSHDNAQLLTGIDFNGTTIGIAYIASMCNPYLSVGIVQDHSEINFLIAVTMAHEMGHNLGMRHDTDYCTCGGYSCIMCAVLSDQPSKFFSNCSYIQYGKFIMNQNSQCILNEPLGTDIVSPPVCGNEILEVGEECDCGCPTNCQDPCCNAATCKQYSWVQCESGECCEQCRFRAAGTVCRRATDNDMDNRCTGQSADCPSNG.

An N-terminal signal peptide occupies residues 1-20 (MIQVLLVTICLAALPYQGSS). The propeptide occupies 21–190 (IILESGNVND…KKASQSNLTP (170 aa)). At glutamate 191 the chain carries Pyrrolidone carboxylic acid (Glu). Residues 199 to 395 (KYVELVIVAD…QNSQCILNEP (197 aa)) form the Peptidase M12B domain. Residue glutamate 202 participates in Ca(2+) binding. An N-linked (GlcNAc...) asparagine glycan is attached at asparagine 259. Aspartate 286 provides a ligand contact to Ca(2+). Residue asparagine 297 is glycosylated (N-linked (GlcNAc...) asparagine). Intrachain disulfides connect cysteine 310-cysteine 390, cysteine 350-cysteine 374, and cysteine 352-cysteine 357. A Zn(2+)-binding site is contributed by histidine 335. The active site involves glutamate 336. Residues histidine 339 and histidine 345 each coordinate Zn(2+). N-linked (GlcNAc...) asparagine glycosylation is present at asparagine 373. 7 residues coordinate Ca(2+): cysteine 390, asparagine 393, valine 405, asparagine 408, glutamate 412, glutamate 415, and aspartate 418. Residues 403 to 484 (PPVCGNEILE…GQSADCPSNG (82 aa)) enclose the Disintegrin domain. 7 cysteine pairs are disulfide-bonded: cysteine 406–cysteine 425, cysteine 417–cysteine 435, cysteine 419–cysteine 430, cysteine 429–cysteine 452, cysteine 443–cysteine 449, cysteine 448–cysteine 473, and cysteine 461–cysteine 480. A TDN-tripeptide motif is present at residues 465–467 (TDN).

This sequence belongs to the venom metalloproteinase (M12B) family. P-II subfamily. P-IIc sub-subfamily. As to quaternary structure, homodimer. It depends on Zn(2+) as a cofactor. The N-terminus is blocked. As to expression, expressed by the venom gland.

It is found in the secreted. Its activity is regulated as follows. Platelet aggregation in inhibited by the metalloproteinase inhibitors EDTA and Batimastat. The hemorrhagic activity is not inhibited by the plasma proteinase inhibitor alpha2-macroglobulin, although the SVMP is able to cleave this plasma inhibitor, generating a 90 kDa product. In terms of biological role, snake venom zinc metalloprotease-disintegrin that hydrolyzes azocasein, gelatin and fibrinogen (Aalpha and Bbeta chains and partially gamma-chain), and exerts a potent local and systemic hemorrhagic activity in mice. It inhibits ADP- and collagen-induced human platelet aggregation (IC(50) = 0.3 uM and 0.7 uM for ADP and collagen, respectively). This inhibition is dependent of protease activity, and probably occurs through the degradation of an unknown platelet receptor. The polypeptide is Zinc metalloproteinase-disintegrin BlatH1 (Bothriechis lateralis (Side-striped palm pitviper)).